Reading from the N-terminus, the 452-residue chain is uncharacterized protein (452 aa).

Residues Lys-3 to Lys-61 form the TRAM domain. Cys-74, Cys-80, Cys-83, and Cys-160 together coordinate [4Fe-4S] cluster. The S-adenosyl-L-methionine site is built by Gln-284, Tyr-313, Glu-334, and Asp-382. Residue Cys-409 is the Nucleophile of the active site.

Belongs to the class I-like SAM-binding methyltransferase superfamily. RNA M5U methyltransferase family.

This is an uncharacterized protein from Caldanaerobacter subterraneus subsp. tengcongensis (strain DSM 15242 / JCM 11007 / NBRC 100824 / MB4) (Thermoanaerobacter tengcongensis).